The following is a 369-amino-acid chain: Type 2 DNA topoisomerase 6 subunit A (369 aa).

The Topo IIA-type catalytic domain maps to lysine 10–serine 146. Tyrosine 103 functions as the O-(5'-phospho-DNA)-tyrosine intermediate in the catalytic mechanism. Mg(2+) contacts are provided by glutamate 197 and aspartate 249.

The protein belongs to the TOP6A family. Homodimer. Heterotetramer of two Top6A and two Top6B chains. The cofactor is Mg(2+).

It catalyses the reaction ATP-dependent breakage, passage and rejoining of double-stranded DNA.. Functionally, relaxes both positive and negative superturns and exhibits a strong decatenase activity. The polypeptide is Type 2 DNA topoisomerase 6 subunit A (Methanocaldococcus jannaschii (strain ATCC 43067 / DSM 2661 / JAL-1 / JCM 10045 / NBRC 100440) (Methanococcus jannaschii)).